We begin with the raw amino-acid sequence, 589 residues long: RNA-directed RNA polymerase subunit beta (589 aa).

The RdRp catalytic domain occupies 259–391 (RRAHEGSVTN…TNTKKTFSEG (133 aa)). D274, D359, and D360 together coordinate Mg(2+).

In terms of assembly, homodimer; the replicase complex can dimerize. Part of the viral RNA-dependent RNA polymerase complex, the other subunits are the host ribosomal protein S1, EF-Tu and EF-Ts. S1 is needed for the initiation of genomic RNA (+)-strand replication. Mg(2+) serves as cofactor.

The catalysed reaction is RNA(n) + a ribonucleoside 5'-triphosphate = RNA(n+1) + diphosphate. Its function is as follows. This is the catalytic subunit of the viral RNA-dependent RNA polymerase complex. This complex is involved in viral RNA replication that produces (+)-stranded genomes via a complementary, (-)-stranded intermediate. Binds RNA cooperatively with the host ribosomal protein S1. In Escherichia coli (Bacteriophage Q-beta), this protein is RNA-directed RNA polymerase subunit beta.